Here is a 64-residue protein sequence, read N- to C-terminus: MSEQVKRVRVTQVGSPIGRKPGQKETLIGLGLHRMNASRELAATPETLGRIRKVKHLLKVEELS.

The segment at 1-22 (MSEQVKRVRVTQVGSPIGRKPG) is disordered.

The protein belongs to the universal ribosomal protein uL30 family. As to quaternary structure, part of the 50S ribosomal subunit.

This chain is Large ribosomal subunit protein uL30, found in Acidiphilium cryptum (strain JF-5).